We begin with the raw amino-acid sequence, 960 residues long: Cyclin-dependent kinase-like 5 (960 aa).

The Protein kinase domain occupies 13–297 (FEILGVVGEG…TEQCLNHPTF (285 aa)). Residues 19 to 27 (VGEGAYGVV) and lysine 42 contribute to the ATP site. The active-site Proton acceptor is the aspartate 135. 4 disordered regions span residues 300 to 349 (QRLL…IQNL), 382 to 566 (KTYQ…RHSK), 646 to 834 (SPQP…TQSQ), and 848 to 960 (ASNH…ETAL). 2 stretches are compositionally biased toward polar residues: residues 319 to 336 (ESST…TALQ) and 382 to 402 (KTYQ…NNNI). Phosphoserine is present on serine 407. Residues 407-417 (SPKEAKSKTEF) show a composition bias toward basic and acidic residues. 3 stretches are compositionally biased toward polar residues: residues 434 to 462 (LKSN…QPNE), 473 to 482 (IPQSSRSPSY), and 510 to 548 (EPST…SGRN). Phosphoserine is present on serine 479. Composition is skewed to basic and acidic residues over residues 549–559 (NRNEGTLDSRR) and 679–704 (QKSE…RHLY). A Phosphoserine modification is found at serine 720. Residues 728 to 748 (HENNVSTRVSSLPSESSSGTN) show a composition bias toward polar residues. Serine 761 is subject to Phosphoserine. The span at 769 to 778 (EQLKEKEKQG) shows a compositional bias: basic and acidic residues. The segment covering 791–816 (QTVPNSDSPDLLTLQKSIHSASTPSS) has biased composition (polar residues). Positions 817–827 (RPKEWRPEKIS) are enriched in basic and acidic residues. 3 stretches are compositionally biased toward polar residues: residues 862–872 (LTAQQTKNSFS), 880–890 (SQASGGSSNIR), and 914–928 (SSVT…SYSE).

The protein belongs to the protein kinase superfamily. CMGC Ser/Thr protein kinase family. CDC2/CDKX subfamily. Interacts with MECP2. Post-translationally, autophosphorylated. Expressed in brain, lung, kidney, prostate, ovary, placenta, pancreas and testis. In terms of tissue distribution, predominant transcript in brain.

Its subcellular location is the nucleus. It is found in the cytoplasm. It localises to the cytoskeleton. The protein resides in the cilium basal body. The protein localises to the microtubule organizing center. Its subcellular location is the centrosome. It catalyses the reaction L-seryl-[protein] + ATP = O-phospho-L-seryl-[protein] + ADP + H(+). The enzyme catalyses L-threonyl-[protein] + ATP = O-phospho-L-threonyl-[protein] + ADP + H(+). Functionally, mediates phosphorylation of MECP2. May regulate ciliogenesis. The chain is Cyclin-dependent kinase-like 5 from Homo sapiens (Human).